The primary structure comprises 431 residues: Teosinte glume architecture 1 (431 aa).

Disordered stretches follow at residues 18–55 (QDHA…GAPA) and 68–102 (ECEP…QQCP). Positions 21–41 (AAAAPSSGGHAANAAAAGTGT) are enriched in low complexity. The segment at 101-178 (CPSCAVDGCR…DGHNRRRRKP (78 aa)) adopts an SBP-type zinc-finger fold. Zn(2+) contacts are provided by cysteine 104, cysteine 109, cysteine 126, histidine 129, cysteine 145, cysteine 148, histidine 152, and cysteine 164. Residues 408 to 419 (GGGSGGGEGSSD) show a composition bias toward gly residues. Residues 408-431 (GGGSGGGEGSSDGGTSSSMPFSWQ) form a disordered region.

Monomer and homodimer. Strongly expressed in immature ears and weakly in husks. Found in the inflorescence meristem of the developing ear, in the spikelet pair primordia, the glume primordia, the cupule forming region and other floral organs. Not detected in other tissues.

Its function is as follows. SBP transcriptional regulator probably involved in the domestication of maize. Acts as a transcriptional repressor binding to a 5'-GTAC-3' motif. May repress the growth of lateral branches in length and numbers. The sequence is that of Teosinte glume architecture 1 from Zea mays (Maize).